The sequence spans 292 residues: Elongation factor Ts (292 aa).

Residues 80–83 (TDFV) are involved in Mg(2+) ion dislocation from EF-Tu.

Belongs to the EF-Ts family.

The protein localises to the cytoplasm. Its function is as follows. Associates with the EF-Tu.GDP complex and induces the exchange of GDP to GTP. It remains bound to the aminoacyl-tRNA.EF-Tu.GTP complex up to the GTP hydrolysis stage on the ribosome. In Cupriavidus taiwanensis (strain DSM 17343 / BCRC 17206 / CCUG 44338 / CIP 107171 / LMG 19424 / R1) (Ralstonia taiwanensis (strain LMG 19424)), this protein is Elongation factor Ts.